The following is a 249-amino-acid chain: Cilia- and flagella-associated protein 410 (249 aa).

LRR repeat units follow at residues 19–40, 41–62, and 63–84; these read NVRK…REMP, SLEV…RSCR, and RLSE…FYLK. The LRRCT domain occupies 97–137; sequence NPCCGTSPHLYRMTVLRNLPHLQKLDNQAVTEEELTRALME. The tract at residues 146–203 is disordered; sequence HREGAGNGCPKPPYALNSVSSATETSQHLLSYTEETEVQGQTTTDQSPSFSPRDTMRS. The span at 162–175 shows a compositional bias: polar residues; that stretch reads NSVSSATETSQHLL.

Found in a complex with CFAP410, NEK1 and SPATA7. Interacts with NEK1. In terms of tissue distribution, expressed in the retina.

Its subcellular location is the cell projection. It is found in the cilium. The protein resides in the cytoplasm. The protein localises to the cytoskeleton. It localises to the cilium basal body. Its subcellular location is the mitochondrion. It is found in the photoreceptor outer segment. Functionally, plays a role in cilia formation and/or maintenance. Plays a role in the regulation of cell morphology and cytoskeletal organization. Involved in DNA damage repair. This Mus musculus (Mouse) protein is Cilia- and flagella-associated protein 410.